The sequence spans 373 residues: MTDNSKTRVVVGMSGGVDSSVTALLLKEQGYDVIGVFMKNWDDTDEFGVCTATEDYKDVAAVADQIGIPYYSVNFEKEYWDRVFEYFLAEYRAGRTPNPDVMCNKEIKFKAFLDYAMTLGADYVATGHYAQVSRDADGTVHMLRGADNNKDQTYFLSQLSQEQLQKVMFPLGHLQKPRVREIAEKAGLVTAKKKDSTGICFIGEKNFKEFLSSYLPAQKGRMMTIDGRDMGEHNGLMYYTIGQRGGMGIGGQKGGDNAPWFVVGKDLSQNILYVGQGFYHDALMSTSLTASQVHFTQNMPDKFTLNCTAKFRYRQPDSKVDVKVNGDKAEVIFDEPQRAITPGQAVVFYDGDECLGGGLIDNAYQEEKICQYI.

ATP-binding positions include 12–19 and Met38; that span reads GMSGGVDS. The interaction with target base in tRNA stretch occupies residues 98-100; that stretch reads NPD. Cys103 serves as the catalytic Nucleophile. Cys103 and Cys200 are disulfide-bonded. Gly127 serves as a coordination point for ATP. Positions 150 to 152 are interaction with tRNA; it reads KDQ. Cys200 (cysteine persulfide intermediate) is an active-site residue. Residues 312 to 313 are interaction with tRNA; that stretch reads RY.

This sequence belongs to the MnmA/TRMU family.

The protein resides in the cytoplasm. It carries out the reaction S-sulfanyl-L-cysteinyl-[protein] + uridine(34) in tRNA + AH2 + ATP = 2-thiouridine(34) in tRNA + L-cysteinyl-[protein] + A + AMP + diphosphate + H(+). Functionally, catalyzes the 2-thiolation of uridine at the wobble position (U34) of tRNA, leading to the formation of s(2)U34. The protein is tRNA-specific 2-thiouridylase MnmA of Streptococcus mutans serotype c (strain ATCC 700610 / UA159).